Consider the following 401-residue polypeptide: NADH-dependent flavin oxidoreductase iliE (401 aa).

FMN-binding positions include 25–28 (ASMS) and glutamine 107. 188–191 (HAAH) provides a ligand contact to substrate. 346–347 (AR) is a binding site for FMN.

The protein belongs to the NADH:flavin oxidoreductase/NADH oxidase family.

In terms of biological role, NADH-dependent flavin oxidoreductase; part of the gene cluster that mediates the biosynthesis of ilicicolin H, a 4-hydroxy-2-pyridonealkaloid that has potent and broad antifungal activities by inhibiting the mitochondrial respiration chain. The biosynthesis of ilicicolin H starts with formation of the tetramic acid by the hybrid PKS-NRPS synthetase iliA with the partnering trans-enoyl reductase iliB since iliA lacks a designated enoylreductase (ER) domain. The cytochrome P450 monooxygenase iliC then catalyzes the ring expansion of the tetramate to the acyclic 2-pyridone. The pericyclase iliD further converts the acyclic 2-pyridone into 8-epi-ilicicolin H. 8-epi-ilicicolin H might then spontaneously convert to ilicicolin H since ilicicolin H is produced in the absence of the epimerase iliE, in contrast to what was observed for the Talaromyces variabilis ilicolin H biosynthetic pathway. This chain is NADH-dependent flavin oxidoreductase iliE, found in Hypocrea jecorina (strain QM6a) (Trichoderma reesei).